A 695-amino-acid polypeptide reads, in one-letter code: Nicastrin (695 aa).

A signal peptide spans 1-22; the sequence is MEMRLNAASIWLLILSYGATIA. Residues 23-654 are Extracellular-facing; the sequence is QGERTRDKMY…IFLRPSNVHQ (632 aa). Residues N45, N108, N116, N138, N381, N461, N489, N585, and N609 are each glycosylated (N-linked (GlcNAc...) asparagine). Residues 655-675 traverse the membrane as a helical segment; it reads VTTLSVGIVVLIISFCLVYII. Over 676–695 the chain is Cytoplasmic; that stretch reads SSRSEVLFEDLPASNAALFG.

The protein belongs to the nicastrin family. As to quaternary structure, component of the gamma-secretase complex, a complex composed of a presenilin (Psn) homodimer, nicastrin (Nct), Aph-1 and Pen-2.

The protein resides in the membrane. In terms of biological role, essential subunit of the gamma-secretase complex, an endoprotease complex that catalyzes the intramembrane cleavage of integral membrane proteins such as Notch. It probably represents a stabilizing cofactor required for the assembly of the gamma-secretase complex. This chain is Nicastrin, found in Drosophila melanogaster (Fruit fly).